The following is a 178-amino-acid chain: Thymidine kinase (178 aa).

Residue Gly13 to Ser20 participates in ATP binding. Catalysis depends on Glu85, which acts as the Proton acceptor. Position 115 (Phe115) interacts with substrate. Residues Cys140 and Cys143 each coordinate Zn(2+). Ile159–Gly163 contacts substrate. Zn(2+) is bound by residues Cys172 and Cys175.

Belongs to the thymidine kinase family.

It carries out the reaction thymidine + ATP = dTMP + ADP + H(+). In Oryctolagus cuniculus (Rabbit), this protein is Thymidine kinase (TK).